A 383-amino-acid chain; its full sequence is Delta(12)-fatty-acid desaturase FAD2 (383 aa).

The next 2 membrane-spanning stretches (helical) occupy residues 56–76 (VVYDLTVAFIFYYIATNYFHL) and 84–104 (VAWPIYWALQGCVLTGVWVIA). The short motif at 105 to 109 (HECGH) is the Histidine box-1 element. A helical membrane pass occupies residues 117–137 (LLDDIVGLVLHSCLLVPYFSW). A Histidine box-2 motif is present at residues 141 to 145 (HRRHH). A run of 3 helical transmembrane segments spans residues 179-199 (LFTLTITLTLGWPLYLAFNVS), 225-245 (IYISDAGVLAVTFGLYRLAAA), and 249-269 (AWVICVYGVPLLIVNAFLVMI). A Histidine box-3 motif is present at residues 315–319 (HVAHH).

This sequence belongs to the fatty acid desaturase type 1 family. As to expression, expressed in leaves and seeds.

It localises to the endoplasmic reticulum membrane. The enzyme catalyses (9Z)-octadecenoyl-CoA + 2 Fe(II)-[cytochrome b5] + O2 + 2 H(+) = (9Z,12Z)-octadecadienoyl-CoA + 2 Fe(III)-[cytochrome b5] + 2 H2O. It catalyses the reaction (9Z)-hexadecenoyl-CoA + 2 Fe(II)-[cytochrome b5] + O2 + 2 H(+) = (9Z,12Z)-hexadecadienoyl-CoA + 2 Fe(III)-[cytochrome b5] + 2 H2O. Its pathway is lipid metabolism; polyunsaturated fatty acid biosynthesis. Its function is as follows. Catalyzes the desaturation of oleic acid (18:1(9Z)) to linoleic acid (18:2(9Z,12Z)). The polypeptide is Delta(12)-fatty-acid desaturase FAD2 (Vernicia fordii (Tung)).